Reading from the N-terminus, the 86-residue chain is MSIFPIALALLLIGLEEGEAARDGYPLSKNNNCKIYCPDTDVCKDTCKNRASAPDGKCDGWNSCYCFKVPDHIPVWGDPGTKPCMT.

Residues 1 to 20 (MSIFPIALALLLIGLEEGEA) form the signal peptide. The region spanning 22 to 85 (RDGYPLSKNN…WGDPGTKPCM (64 aa)) is the LCN-type CS-alpha/beta domain. Cystine bridges form between Cys33–Cys84, Cys37–Cys58, Cys43–Cys64, and Cys47–Cys66.

The protein belongs to the long (4 C-C) scorpion toxin superfamily. Sodium channel inhibitor family. Beta subfamily. In terms of tissue distribution, expressed by the venom gland.

It is found in the secreted. In terms of biological role, beta toxins bind voltage-independently at site-4 of sodium channels (Nav) and shift the voltage of activation toward more negative potentials thereby affecting sodium channel activation and promoting spontaneous and repetitive firing. This is Toxin Tpa6 from Tityus pachyurus (Colombian scorpion).